The sequence spans 437 residues: GTPase Obg (437 aa).

The 160-residue stretch at 2–161 (SDFIDRALIT…RELQLELKVI (160 aa)) folds into the Obg domain. Residues 162–335 (ADVGLVGFPN…LQRRIVDILR (174 aa)) enclose the OBG-type G domain. Residues 168–175 (GFPNAGKS), 193–197 (FTTLS), 214–217 (DIPG), 284–287 (NKTD), and 316–318 (SAA) contribute to the GTP site. Mg(2+) is bound by residues Ser175 and Thr195. Residues 355 to 433 (FSNIDPNDFW…IEKAELLWQD (79 aa)) form the OCT domain.

This sequence belongs to the TRAFAC class OBG-HflX-like GTPase superfamily. OBG GTPase family. Monomer. It depends on Mg(2+) as a cofactor.

It localises to the cytoplasm. Its function is as follows. An essential GTPase which binds GTP, GDP and possibly (p)ppGpp with moderate affinity, with high nucleotide exchange rates and a fairly low GTP hydrolysis rate. Plays a role in control of the cell cycle, stress response, ribosome biogenesis and in those bacteria that undergo differentiation, in morphogenesis control. The chain is GTPase Obg from Herpetosiphon aurantiacus (strain ATCC 23779 / DSM 785 / 114-95).